A 372-amino-acid polypeptide reads, in one-letter code: 4-hydroxy-3-methylbut-2-en-1-yl diphosphate synthase (flavodoxin) (372 aa).

[4Fe-4S] cluster contacts are provided by Cys270, Cys273, Cys305, and Glu312.

The protein belongs to the IspG family. [4Fe-4S] cluster serves as cofactor.

It catalyses the reaction (2E)-4-hydroxy-3-methylbut-2-enyl diphosphate + oxidized [flavodoxin] + H2O + 2 H(+) = 2-C-methyl-D-erythritol 2,4-cyclic diphosphate + reduced [flavodoxin]. It participates in isoprenoid biosynthesis; isopentenyl diphosphate biosynthesis via DXP pathway; isopentenyl diphosphate from 1-deoxy-D-xylulose 5-phosphate: step 5/6. Converts 2C-methyl-D-erythritol 2,4-cyclodiphosphate (ME-2,4cPP) into 1-hydroxy-2-methyl-2-(E)-butenyl 4-diphosphate. The chain is 4-hydroxy-3-methylbut-2-en-1-yl diphosphate synthase (flavodoxin) from Alcanivorax borkumensis (strain ATCC 700651 / DSM 11573 / NCIMB 13689 / SK2).